A 143-amino-acid chain; its full sequence is Small ribosomal subunit protein uS9 (143 aa).

Residues 118-143 (DSRRTEPHKPNRSTKGPRAKRQKSYR) form a disordered region. Residues 127 to 143 (PNRSTKGPRAKRQKSYR) are compositionally biased toward basic residues.

It belongs to the universal ribosomal protein uS9 family.

In Thermococcus sibiricus (strain DSM 12597 / MM 739), this protein is Small ribosomal subunit protein uS9.